The primary structure comprises 41 residues: Minor histocompatibility protein HB-1 (41 aa).

The loss of recognition by cytotoxic T lymphocyte (CTL) stretch occupies residues 9–17 (EEKRGSLHV).

As to quaternary structure, HB-1 forms a complex with MHC class I HLA-B44. Expressed in acute lymphoblastic leukemia B-cells and Epstein-Barr virus-transformed B-cells.

Functionally, precursor of the histocomplatibility antigen HB-1. More generally, minor histocomplatibility antigens (mHags) refer to immunogenic peptide which, when complexed with MHC, can generate an immune response after recognition by specific T-cells. The peptides are derived from polymorphic intracellular proteins, which are cleaved by normal pathways of antigen processing. The binding of these peptides to MHC class I or class II molecules and its expression on the cell surface can stimulate T-cell responses and thereby trigger graft rejection or graft-versus-host disease (GVHD) after hematopoietic stem cell transplantation from HLA-identical sibling donor. GVHD is a frequent complication after bone marrow transplantation (BMT), due to mismatch of minor histocomplatibility antigen in HLA-matched sibling marrow transplants. HB-1 is presented on the cell surface by MHC class I HLA-B44. This complex specifically elicits donor-cytotoxic T lymphocyte (CTL) reactivity in B-cell acute lymphoblastic leukemia (B-ALL) after treatment by HLA-identical allogenic bone marrow transplantation (BMT). It induces cell recognition and lysis by CTL. However, HB-1 restricted expression in B-ALL cells and not in normal tissues may allow a specific CTL reactivity against B-ALL without the risk of evoking graft-versus-host disease. This chain is Minor histocompatibility protein HB-1 (HMHB1), found in Homo sapiens (Human).